Here is a 155-residue protein sequence, read N- to C-terminus: SsrA-binding protein (155 aa).

The span at 135 to 147 shows a compositional bias: basic and acidic residues; it reads TIKRRDQERDIKK. A disordered region spans residues 135 to 155; the sequence is TIKRRDQERDIKKQMKHYNAR.

Belongs to the SmpB family.

It is found in the cytoplasm. Its function is as follows. Required for rescue of stalled ribosomes mediated by trans-translation. Binds to transfer-messenger RNA (tmRNA), required for stable association of tmRNA with ribosomes. tmRNA and SmpB together mimic tRNA shape, replacing the anticodon stem-loop with SmpB. tmRNA is encoded by the ssrA gene; the 2 termini fold to resemble tRNA(Ala) and it encodes a 'tag peptide', a short internal open reading frame. During trans-translation Ala-aminoacylated tmRNA acts like a tRNA, entering the A-site of stalled ribosomes, displacing the stalled mRNA. The ribosome then switches to translate the ORF on the tmRNA; the nascent peptide is terminated with the 'tag peptide' encoded by the tmRNA and targeted for degradation. The ribosome is freed to recommence translation, which seems to be the essential function of trans-translation. The chain is SsrA-binding protein from Streptococcus pyogenes serotype M3 (strain SSI-1).